A 299-amino-acid polypeptide reads, in one-letter code: MKLKFTKMHGAGNDFVVLDGYTQPVNLTPAQVRALADRHFGVGADQLLLVEKPTVAGVDFRYRIFNCDGGEVEHCGNGARCFVKFVRDSGLTDQRSVRVQVQKGTITLTMQENGEVLVDMGTPVFDPERVPFATKGLQGRGEGADTLWPLDVNGTTRWISVVSMGNPHAVQVVDDVEAFPVLVEGPVIERHARFPQRVNAGFMQIVGRSEIKLRVYERGAGETLACGTGACAAVAAGIRRGLLDAPVLVHTHGGKLTITWDAAQADQPLLMAGPAATVFEGEIELPDSLADSLANSQAA.

3 residues coordinate substrate: N13, Q46, and N66. C75 functions as the Proton donor in the catalytic mechanism. Substrate contacts are provided by residues 76 to 77 (GN), N166, N199, and 217 to 218 (ER). C226 serves as the catalytic Proton acceptor. Residue 227 to 228 (GT) participates in substrate binding.

The protein belongs to the diaminopimelate epimerase family. Homodimer.

The protein localises to the cytoplasm. The enzyme catalyses (2S,6S)-2,6-diaminopimelate = meso-2,6-diaminopimelate. It participates in amino-acid biosynthesis; L-lysine biosynthesis via DAP pathway; DL-2,6-diaminopimelate from LL-2,6-diaminopimelate: step 1/1. Catalyzes the stereoinversion of LL-2,6-diaminopimelate (L,L-DAP) to meso-diaminopimelate (meso-DAP), a precursor of L-lysine and an essential component of the bacterial peptidoglycan. This is Diaminopimelate epimerase from Paraburkholderia phytofirmans (strain DSM 17436 / LMG 22146 / PsJN) (Burkholderia phytofirmans).